Reading from the N-terminus, the 296-residue chain is Zinc finger CCCH-type antiviral protein 1-like (296 aa).

Position 2 is an N-acetylalanine (alanine 2). 2 consecutive C3H1-type zinc fingers follow at residues 111-136 (LCRR…HDIH) and 198-219 (VCKS…HQLI).

This chain is Zinc finger CCCH-type antiviral protein 1-like (Zc3hav1l), found in Mus musculus (Mouse).